A 344-amino-acid polypeptide reads, in one-letter code: Transcription factor AIG1 (344 aa).

The region spanning alanine 131–leucine 180 is the bHLH domain. The disordered stretch occupies residues asparagine 313 to asparagine 344. Residues aspartate 318–serine 327 are compositionally biased toward low complexity.

As to quaternary structure, homodimer. Interacts with LHW.

It localises to the nucleus. In terms of biological role, transcription factor required for MONOPTEROS-dependent root initiation in embryo. Transcriptionally controlled by MONOPTEROS. The protein is Transcription factor AIG1 (BHLH32) of Arabidopsis thaliana (Mouse-ear cress).